Here is a 519-residue protein sequence, read N- to C-terminus: MIOREX complex component 12 (519 aa).

The N-terminal 35 residues, 1-35, are a transit peptide targeting the mitochondrion; it reads MLRSLHSAATLSNKRFYSLISHSNRKNIIKKLLRH.

In terms of assembly, associates with the mitochondrial ribosome.

The protein localises to the mitochondrion. In terms of biological role, component of MIOREX complexes, large expressome-like assemblies of ribosomes with factors involved in all the steps of post-transcriptional gene expression. This chain is MIOREX complex component 12, found in Saccharomyces cerevisiae (strain ATCC 204508 / S288c) (Baker's yeast).